The primary structure comprises 468 residues: tRNA threonylcarbamoyladenosine dehydratase (468 aa).

3 helical membrane passes run 15-35, 109-129, and 315-335; these read FWIA…TLEF, NSFV…NMLA, and ILPV…TYVL.

The protein belongs to the HesA/MoeB/ThiF family.

The protein resides in the mitochondrion outer membrane. Functionally, catalyzes the ATP-dependent dehydration of threonylcarbamoyladenosine at position 37 (t(6)A37) to form cyclic t(6)A37 (ct(6)A37) in tRNAs that read codons beginning with adenine. This is tRNA threonylcarbamoyladenosine dehydratase (tcd1) from Schizosaccharomyces pombe (strain 972 / ATCC 24843) (Fission yeast).